The following is a 381-amino-acid chain: tRNA pseudouridine synthase D (381 aa).

Asp81 functions as the Nucleophile in the catalytic mechanism. Residues 160-335 (GMPNYFGSQR…TLGSRRFFWV (176 aa)) enclose the TRUD domain.

Belongs to the pseudouridine synthase TruD family.

It catalyses the reaction uridine(13) in tRNA = pseudouridine(13) in tRNA. Responsible for synthesis of pseudouridine from uracil-13 in transfer RNAs. This Helicobacter pylori (strain J99 / ATCC 700824) (Campylobacter pylori J99) protein is tRNA pseudouridine synthase D.